A 282-amino-acid chain; its full sequence is NAD(P)H-hydrate epimerase (282 aa).

Residues 1–53 (MSGLRTLLGLGLLVAGSRLPRIASRQSVCRAGPIWWGTQHRSSETMASAAVKY) constitute a mitochondrion transit peptide. In terms of domain architecture, YjeF N-terminal spans 59 to 269 (AQAVDEELFN…ALEKKYQLNL (211 aa)). (6S)-NADPHX is bound at residue 113-117 (NNGGD). Asn-114 is a binding site for K(+). The residue at position 138 (Lys-138) is an N6-succinyllysine. K(+) is bound at residue Asp-179. Residues 183-189 (GFSFKGD) and Asp-212 contribute to the (6S)-NADPHX site. Ser-215 lines the K(+) pocket.

It belongs to the NnrE/AIBP family. As to quaternary structure, homodimer. Interacts with APOA1 and APOA2. K(+) is required as a cofactor. Post-translationally, undergoes physiological phosphorylation during sperm capacitation, downstream to PKA activation.

It localises to the mitochondrion. The protein resides in the secreted. The catalysed reaction is (6R)-NADHX = (6S)-NADHX. The enzyme catalyses (6R)-NADPHX = (6S)-NADPHX. Its function is as follows. Catalyzes the epimerization of the S- and R-forms of NAD(P)HX, a damaged form of NAD(P)H that is a result of enzymatic or heat-dependent hydration. This is a prerequisite for the S-specific NAD(P)H-hydrate dehydratase to allow the repair of both epimers of NAD(P)HX. Accelerates cholesterol efflux from endothelial cells to high-density lipoprotein (HDL) and thereby regulates angiogenesis. This chain is NAD(P)H-hydrate epimerase, found in Rattus norvegicus (Rat).